A 98-amino-acid polypeptide reads, in one-letter code: Citrate lyase acyl carrier protein 1 (98 aa).

Ser14 carries the O-(phosphoribosyl dephospho-coenzyme A)serine modification.

This sequence belongs to the CitD family. In terms of assembly, oligomer with a subunit composition of (alpha,beta,gamma)6.

The protein localises to the cytoplasm. Functionally, covalent carrier of the coenzyme of citrate lyase. This is Citrate lyase acyl carrier protein 1 from Salmonella paratyphi A (strain ATCC 9150 / SARB42).